The following is a 157-amino-acid chain: Tripartite terminase subunit 2 (157 aa).

The disordered stretch occupies residues 1 to 69; it reads MSWAKQRVPF…DGEDGHALPD (69 aa). Positions 11 to 27 are enriched in acidic residues; that stretch reads LDDDDGEEENDVQDDVD.

This sequence belongs to the herpesviridae TRM2 protein family. In terms of assembly, associates with TRM1 and TRM3 to form the tripartite terminase complex.

The protein resides in the host nucleus. In terms of biological role, component of the molecular motor that translocates viral genomic DNA in empty capsid during DNA packaging. Forms a tripartite terminase complex together with TRM1 and TRM3 in the host cytoplasm. Once the complex reaches the host nucleus, it interacts with the capsid portal vertex. This portal forms a ring in which genomic DNA is translocated into the capsid. The chain is Tripartite terminase subunit 2 from Homo sapiens (Human).